The following is a 183-amino-acid chain: Bifunctional protein PyrR (183 aa).

The PRPP-binding signature appears at 98 to 110 (VVLVDDVLYTGRT).

This sequence belongs to the purine/pyrimidine phosphoribosyltransferase family. PyrR subfamily.

The enzyme catalyses UMP + diphosphate = 5-phospho-alpha-D-ribose 1-diphosphate + uracil. Functionally, regulates the transcription of the pyrimidine nucleotide (pyr) operon in response to exogenous pyrimidines. In terms of biological role, also displays a weak uracil phosphoribosyltransferase activity which is not physiologically significant. The sequence is that of Bifunctional protein PyrR from Roseiflexus sp. (strain RS-1).